The sequence spans 378 residues: Chaperone protein DnaJ (378 aa).

In terms of domain architecture, J spans 5–69 (EYYDRLGVSK…QKRAAYDQYG (65 aa)). The segment at 134 to 216 (GVEKEVSYNR…CHGTGHEKQA (83 aa)) adopts a CR-type zinc-finger fold. Positions 147, 150, 164, 167, 190, 193, 204, and 207 each coordinate Zn(2+). CXXCXGXG motif repeat units lie at residues 147–154 (CGTCLGSG), 164–171 (CRKCHGSG), 190–197 (CDICHGSG), and 204–211 (CQTCHGTG).

This sequence belongs to the DnaJ family. As to quaternary structure, homodimer. It depends on Zn(2+) as a cofactor.

It is found in the cytoplasm. Functionally, participates actively in the response to hyperosmotic and heat shock by preventing the aggregation of stress-denatured proteins and by disaggregating proteins, also in an autonomous, DnaK-independent fashion. Unfolded proteins bind initially to DnaJ; upon interaction with the DnaJ-bound protein, DnaK hydrolyzes its bound ATP, resulting in the formation of a stable complex. GrpE releases ADP from DnaK; ATP binding to DnaK triggers the release of the substrate protein, thus completing the reaction cycle. Several rounds of ATP-dependent interactions between DnaJ, DnaK and GrpE are required for fully efficient folding. Also involved, together with DnaK and GrpE, in the DNA replication of plasmids through activation of initiation proteins. This chain is Chaperone protein DnaJ, found in Streptococcus pyogenes serotype M1.